Reading from the N-terminus, the 354-residue chain is UDP-3-O-acylglucosamine N-acyltransferase (354 aa).

His258 functions as the Proton acceptor in the catalytic mechanism.

The protein belongs to the transferase hexapeptide repeat family. LpxD subfamily. As to quaternary structure, homotrimer.

It catalyses the reaction a UDP-3-O-[(3R)-3-hydroxyacyl]-alpha-D-glucosamine + a (3R)-hydroxyacyl-[ACP] = a UDP-2-N,3-O-bis[(3R)-3-hydroxyacyl]-alpha-D-glucosamine + holo-[ACP] + H(+). The protein operates within bacterial outer membrane biogenesis; LPS lipid A biosynthesis. Its function is as follows. Catalyzes the N-acylation of UDP-3-O-acylglucosamine using 3-hydroxyacyl-ACP as the acyl donor. Is involved in the biosynthesis of lipid A, a phosphorylated glycolipid that anchors the lipopolysaccharide to the outer membrane of the cell. The sequence is that of UDP-3-O-acylglucosamine N-acyltransferase from Rhizobium meliloti (strain 1021) (Ensifer meliloti).